Reading from the N-terminus, the 155-residue chain is Gas vesicle protein K (155 aa).

This sequence belongs to the gas vesicle GvpK family.

It localises to the gas vesicle. In terms of biological role, might be involved in nucleating gas vesicle formation. Gas vesicles (GV) are hollow, gas filled proteinaceous nanostructures. During planktonic growth they allow positioning of the organism at a favorable depth for light or nutrient acquisition. The sequence is that of Gas vesicle protein K from Dolichospermum flosaquae (Anabaena flos-aquae).